The following is a 115-amino-acid chain: Histidine-rich carboxyl terminus protein 1 (115 aa).

The helical transmembrane segment at 9–29 (ALVGWITGAAVAVLLLLLLLA) threads the bilayer. The segment at 86 to 115 (GLHHHHHPRHTPHHLHHHHHPHRHHPRHAR) is disordered. The segment covering 87–115 (LHHHHHPRHTPHHLHHHHHPHRHHPRHAR) has biased composition (basic residues).

The protein resides in the membrane. The sequence is that of Histidine-rich carboxyl terminus protein 1 (HRCT1) from Homo sapiens (Human).